Here is a 384-residue protein sequence, read N- to C-terminus: Glucose-fructose oxidoreductase domain-containing protein 2 (384 aa).

An N-terminal signal peptide occupies residues 1-25 (MKTLPGIGVFGTGNTARVLISLLRA). The tract at residues 358-384 (GEWESVELTNDETDSNQNLSEVIQHNL) is disordered. Positions 372–384 (SNQNLSEVIQHNL) are enriched in polar residues.

The protein belongs to the Gfo/Idh/MocA family.

It localises to the secreted. It is found in the extracellular space. The protein localises to the extracellular matrix. Functionally, promotes matrix assembly. The protein is Glucose-fructose oxidoreductase domain-containing protein 2 (gfod2) of Xenopus tropicalis (Western clawed frog).